The following is an 824-amino-acid chain: Sphingomyelin phosphodiesterase 4 (824 aa).

Residues 777 to 797 form a helical membrane-spanning segment; sequence LAFLFIFYILGSLLSLGPLIC.

The cofactor is Mg(2+).

The protein resides in the endoplasmic reticulum membrane. It localises to the golgi apparatus membrane. It is found in the nucleus envelope. The protein localises to the cell membrane. Its subcellular location is the sarcolemma. The enzyme catalyses a sphingomyelin + H2O = phosphocholine + an N-acylsphing-4-enine + H(+). Functionally, catalyzes the hydrolysis of membrane sphingomyelin to form phosphorylcholine and ceramide. It has a relevant role in the homeostasis of membrane sphingolipids, thereby influencing membrane integrity, and endoplasmic reticulum organization and function. May sensitize cells to DNA damage-induced apoptosis. The protein is Sphingomyelin phosphodiesterase 4 (smpd4) of Xenopus laevis (African clawed frog).